The following is a 156-amino-acid chain: SsrA-binding protein (156 aa).

Positions 135–156 (HALRERQDRREADRAMSERKDR) are disordered.

Belongs to the SmpB family.

It is found in the cytoplasm. Its function is as follows. Required for rescue of stalled ribosomes mediated by trans-translation. Binds to transfer-messenger RNA (tmRNA), required for stable association of tmRNA with ribosomes. tmRNA and SmpB together mimic tRNA shape, replacing the anticodon stem-loop with SmpB. tmRNA is encoded by the ssrA gene; the 2 termini fold to resemble tRNA(Ala) and it encodes a 'tag peptide', a short internal open reading frame. During trans-translation Ala-aminoacylated tmRNA acts like a tRNA, entering the A-site of stalled ribosomes, displacing the stalled mRNA. The ribosome then switches to translate the ORF on the tmRNA; the nascent peptide is terminated with the 'tag peptide' encoded by the tmRNA and targeted for degradation. The ribosome is freed to recommence translation, which seems to be the essential function of trans-translation. In Kineococcus radiotolerans (strain ATCC BAA-149 / DSM 14245 / SRS30216), this protein is SsrA-binding protein.